A 525-amino-acid polypeptide reads, in one-letter code: NADH-quinone oxidoreductase subunit N (525 aa).

14 consecutive transmembrane segments (helical) span residues 26–46 (LSPM…DAFA), 53–73 (VLQP…VVLL), 90–110 (PTLF…LLVA), 143–163 (VQTE…LFVA), 167–187 (LLVM…LCGL), 202–222 (YFLL…FAYG), 246–266 (LYLS…AAPF), 278–298 (PTPI…GALL), 314–334 (PVIW…ALTQ), 341–361 (LAYS…GSNI), 368–388 (MFYL…VSLV), 411–431 (LAGT…TSGF), 449–469 (LVVV…RVIV), and 487–507 (PTLT…LGVA).

Belongs to the complex I subunit 2 family. NDH-1 is composed of 14 different subunits. Subunits NuoA, H, J, K, L, M, N constitute the membrane sector of the complex.

It localises to the cell membrane. The enzyme catalyses a quinone + NADH + 5 H(+)(in) = a quinol + NAD(+) + 4 H(+)(out). In terms of biological role, NDH-1 shuttles electrons from NADH, via FMN and iron-sulfur (Fe-S) centers, to quinones in the respiratory chain. The immediate electron acceptor for the enzyme in this species is believed to be a menaquinone. Couples the redox reaction to proton translocation (for every two electrons transferred, four hydrogen ions are translocated across the cytoplasmic membrane), and thus conserves the redox energy in a proton gradient. The sequence is that of NADH-quinone oxidoreductase subunit N from Parafrankia sp. (strain EAN1pec).